Consider the following 66-residue polypeptide: Cocaine- and amphetamine-regulated transcript protein (66 aa).

2 cysteine pairs are disulfide-bonded: Cys-34-Cys-52 and Cys-40-Cys-60.

This sequence belongs to the CART family.

The protein resides in the secreted. Functionally, satiety factor closely associated with the actions of leptin and neuropeptide y; this anorectic peptide inhibits both normal and starvation-induced feeding and completely blocks the feeding response induced by neuropeptide Y and regulated by leptin in the hypothalamus. This chain is Cocaine- and amphetamine-regulated transcript protein (CARTPT), found in Sus scrofa (Pig).